A 301-amino-acid chain; its full sequence is MTVIMDGKKLAELRLVETKNDLLALKDKYQITVKLVIILVGNNDASLIYVNNKVAKAKAIGMDSEIIRLFEFIEEKKLLSVIDDLNCDSTVHGIIVQLPLPPHIDALKIFARIDSRKDVDGLNPINIGYLNIGANHGLIPCTALGCIDLLQYYVTDLKGKHVVVIGKSNIVGKPLSALLLRHSCTVTICHSATVDLALHTRTADIVISAVGKANFLTNKHFSGNLAFIDVGISHIYDLQTHKRKLVGDGDFLKIKDLVKFITPVPGGVGPMTVAYLLKNTLTAAKLIYASIIDNDDEKHLC.

NADP(+)-binding positions include 166–168 (GKS), serine 191, and isoleucine 232.

Belongs to the tetrahydrofolate dehydrogenase/cyclohydrolase family. Homodimer.

The enzyme catalyses (6R)-5,10-methylene-5,6,7,8-tetrahydrofolate + NADP(+) = (6R)-5,10-methenyltetrahydrofolate + NADPH. It carries out the reaction (6R)-5,10-methenyltetrahydrofolate + H2O = (6R)-10-formyltetrahydrofolate + H(+). It functions in the pathway one-carbon metabolism; tetrahydrofolate interconversion. In terms of biological role, catalyzes the oxidation of 5,10-methylenetetrahydrofolate to 5,10-methenyltetrahydrofolate and then the hydrolysis of 5,10-methenyltetrahydrofolate to 10-formyltetrahydrofolate. This is Bifunctional protein FolD from Orientia tsutsugamushi (strain Ikeda) (Rickettsia tsutsugamushi).